A 511-amino-acid chain; its full sequence is Adenosine deaminase 2 (511 aa).

The first 29 residues, 1-29 (MLVDGPSERPALCFLLLAVAMSFFGSALS), serve as a signal peptide directing secretion. The tract at residues 30–100 (IDETRAHLLL…HLIERSQVFN (71 aa)) is dimerization. The Zn(2+) site is built by His-112 and His-114. Asp-115 lines the substrate pocket. A glycan (N-linked (GlcNAc...) asparagine) is linked at Asn-127. The interval 127–185 (NVTYRPHCHICFTPRGIMQFRFAHPTPRPSEKCSKWILLEDYRKRVQNVTEFDDSLLRN) is PRB domain. Cys-137 and Cys-159 form a disulfide bridge. N-linked (GlcNAc...) asparagine glycans are attached at residues Asn-174 and Asn-185. Substrate is bound by residues 204–211 (WSKFETIF), His-293, and Gly-326. His-356 lines the Zn(2+) pocket. The Proton donor role is filled by Glu-359. N-linked (GlcNAc...) asparagine glycosylation occurs at Asn-378. The active-site Proton acceptor is His-384. Position 441 (Asp-441) interacts with Zn(2+). Asp-442 contacts substrate.

Belongs to the metallo-dependent hydrolases superfamily. Adenosine and AMP deaminases family. ADGF subfamily. In terms of assembly, homodimer. Interacts with adenosine receptors. Binds heparin. Zn(2+) is required as a cofactor. In terms of tissue distribution, detected in blood plasma (at protein level). Widely expressed, with most abundant expression in human adult heart, lung, lymphoblasts, and placenta as well as fetal lung, liver, and kidney. In embryo, expressed in the outflow tract and atrium of the developing heart, the VII/VIII cranial nerve ganglion, and the notochord.

The protein resides in the secreted. The catalysed reaction is adenosine + H2O + H(+) = inosine + NH4(+). Adenosine deaminase that may contribute to the degradation of extracellular adenosine, a signaling molecule that controls a variety of cellular responses. Requires elevated adenosine levels for optimal enzyme activity. Binds to cell surfaces via proteoglycans and may play a role in the regulation of cell proliferation and differentiation, independently of its enzyme activity. This chain is Adenosine deaminase 2, found in Homo sapiens (Human).